Consider the following 37-residue polypeptide: Small ribosomal subunit protein eS32 (37 aa).

It belongs to the eukaryotic ribosomal protein eS32 family. In terms of assembly, part of the small ribosomal subunit.

Its function is as follows. Interacts with N(4)-acetylcytidine (ac(4)C) 1459 of the small rRNA; the acetyl group of ac(4)C1459 briges the interaction with this protein. The sequence is that of Small ribosomal subunit protein eS32 (rpl41e) from Thermococcus kodakarensis (strain ATCC BAA-918 / JCM 12380 / KOD1) (Pyrococcus kodakaraensis (strain KOD1)).